Reading from the N-terminus, the 413-residue chain is Amino acid transporter AVT3B (413 aa).

Over 1–27 the chain is Cytoplasmic; it reads MGLEEQGRAREDTPLLGKGRPLSSKFK. Residues 28–48 form a helical membrane-spanning segment; the sequence is TFANVFIAIVGAGVLGLPYAF. Topologically, residues 49–54 are vacuolar; it reads KRTGWL. Residues 55–75 form a helical membrane-spanning segment; sequence MGLLTLFSVAALINHCMMLLV. Residues 76–103 are Cytoplasmic-facing; that stretch reads HIRRKLGVSNIGSFGDLGFAACGNLGRF. The helical transmembrane segment at 104-124 threads the bilayer; the sequence is VVDILIILSQAGFCVGYLIFI. At 125–145 the chain is on the vacuolar side; that stretch reads GNTLANLSKPTKSTTLMSLRH. The chain crosses the membrane as a helical span at residues 146-166; the sequence is LMGVSPKSLYIWGCFPFQLGL. At 167–174 the chain is on the cytoplasmic side; sequence NSIKTLTH. The chain crosses the membrane as a helical span at residues 175 to 195; the sequence is LAPLSIFADVVDLGAMAVVIV. The Vacuolar segment spans residues 196 to 207; the sequence is EDIKITVVQRPQ. The chain crosses the membrane as a helical span at residues 208 to 228; it reads VVAFGGMSVFFYGMGVAVYAF. The Cytoplasmic segment spans residues 229-249; that stretch reads EGVGMVLPLESETKDKDKFGK. Residues 250 to 270 traverse the membrane as a helical segment; the sequence is VLALSMLFIAVMYGSFGVLGY. The Vacuolar segment spans residues 271-288; the sequence is MAFGDDTMDIITANLGAG. A helical transmembrane segment spans residues 289–309; sequence VVSSLVQLGLCINLFFTFPLM. Residues 310–331 lie on the Cytoplasmic side of the membrane; the sequence is MNPVFEIVERRFWSGMYCVWLR. A helical membrane pass occupies residues 332–352; sequence WLLVLAVTLVALLVPNFADFL. The Vacuolar portion of the chain corresponds to 353–355; sequence SLV. The chain crosses the membrane as a helical span at residues 356–376; sequence GSSVCCALGFVLPSLFHLMVF. At 377 to 390 the chain is on the cytoplasmic side; that stretch reads KDEMEWKQRALDVG. Residues 391-411 form a helical membrane-spanning segment; the sequence is ILLLGVILGVSGTWSSLTEIF. Residues 412 to 413 are Vacuolar-facing; that stretch reads QE.

Belongs to the amino acid/polyamine transporter 2 family. Amino acid/auxin permease (AAAP) (TC 2.A.18.8) subfamily. Ubiquitous.

It localises to the vacuole membrane. Translocates preferentially neutral amino acids from the vacuole to the cytoplasm. The sequence is that of Amino acid transporter AVT3B from Arabidopsis thaliana (Mouse-ear cress).